We begin with the raw amino-acid sequence, 377 residues long: Opsin-1 (377 aa).

The Extracellular portion of the chain corresponds to 1–58 (MDPGPGLAALQAWAAKSPAYGAANQTVVDKVPPDMMHMIDPHWYQFPPMNPLWHALLG). N-linked (GlcNAc...) asparagine glycosylation occurs at Asn24. A helical transmembrane segment spans residues 59–79 (FTIGVLGFVSISGNGMVIYIF). Topologically, residues 80-92 (MSTKSLKTPSNLL) are cytoplasmic. The helical transmembrane segment at 93-113 (VVNLAFSDFLMMCAMSPAMVV) threads the bilayer. At 114–129 (NCYYETWVWGPFACEL) the chain is on the extracellular side. Cysteines 127 and 204 form a disulfide. Residues 130-150 (YACAGSLFGCASIWTMTMIAF) traverse the membrane as a helical segment. At 151-169 (DRYNVIVKGIAAKPMTSNG) the chain is on the cytoplasmic side. A helical transmembrane segment spans residues 170–190 (ALLRILGIWVFSLAWTLLPFF). Residues 191–220 (GWNRYVPEGNMTACGTDYLSKSWVSRSYIL) lie on the Extracellular side of the membrane. An N-linked (GlcNAc...) asparagine glycan is attached at Asn200. Residues 221–241 (IYSVFVYFLPLLLIIYSYFFI) traverse the membrane as a helical segment. The Cytoplasmic segment spans residues 242 to 280 (VQAVAAHEKAMREQAKKMNVASLRSSEAANTSAECKLAK). Residues 281–301 (VALMTISLWFMAWTPYLVINY) form a helical membrane-spanning segment. Over 302-312 (TGVFESAPISP) the chain is Extracellular. Residues 313-335 (LATIWGSLFAKANAVYNPIVYGI) traverse the membrane as a helical segment. At 336–377 (SHPKYQAALYAKFPSLQCQSAPEDAGSVASGTTAVSEEKPAA) the chain is on the cytoplasmic side. Positions 357 to 377 (PEDAGSVASGTTAVSEEKPAA) are disordered.

This sequence belongs to the G-protein coupled receptor 1 family. Opsin subfamily. As to expression, in the retina, expression is abundant and uniform in the anterior-posterior and oblique cells of the retinulae, with some expression in the proximal cells. There is no expression in the dorsal rim retinulae (at protein level).

The protein localises to the cell projection. It is found in the rhabdomere membrane. In terms of biological role, visual pigments are the light-absorbing molecules that mediate vision. They consist of an apoprotein, opsin, covalently linked to cis-retinal. May play a role in photoperiodic photoreception. In Manduca sexta (Tobacco hawkmoth), this protein is Opsin-1 (OP1).